Reading from the N-terminus, the 310-residue chain is Methionyl-tRNA formyltransferase (310 aa).

A (6S)-5,6,7,8-tetrahydrofolate-binding site is contributed by 110–113; that stretch reads SLLP.

It belongs to the Fmt family.

The catalysed reaction is L-methionyl-tRNA(fMet) + (6R)-10-formyltetrahydrofolate = N-formyl-L-methionyl-tRNA(fMet) + (6S)-5,6,7,8-tetrahydrofolate + H(+). Attaches a formyl group to the free amino group of methionyl-tRNA(fMet). The formyl group appears to play a dual role in the initiator identity of N-formylmethionyl-tRNA by promoting its recognition by IF2 and preventing the misappropriation of this tRNA by the elongation apparatus. The polypeptide is Methionyl-tRNA formyltransferase (Halorhodospira halophila (strain DSM 244 / SL1) (Ectothiorhodospira halophila (strain DSM 244 / SL1))).